Here is a 359-residue protein sequence, read N- to C-terminus: tRNA N6-adenosine threonylcarbamoyltransferase (359 aa).

Residues His115 and His119 each coordinate Fe cation. Substrate-binding positions include 137-141 (LVSGG), Asp170, Gly183, and Asn283. Asp311 contributes to the Fe cation binding site. The segment at 328 to 359 (APDSLDIAPRSRWPLDEKSAPVFGTGRRGAKA) is disordered.

This sequence belongs to the KAE1 / TsaD family. Fe(2+) serves as cofactor.

The protein resides in the cytoplasm. It carries out the reaction L-threonylcarbamoyladenylate + adenosine(37) in tRNA = N(6)-L-threonylcarbamoyladenosine(37) in tRNA + AMP + H(+). Functionally, required for the formation of a threonylcarbamoyl group on adenosine at position 37 (t(6)A37) in tRNAs that read codons beginning with adenine. Is involved in the transfer of the threonylcarbamoyl moiety of threonylcarbamoyl-AMP (TC-AMP) to the N6 group of A37, together with TsaE and TsaB. TsaD likely plays a direct catalytic role in this reaction. The polypeptide is tRNA N6-adenosine threonylcarbamoyltransferase (Brucella ovis (strain ATCC 25840 / 63/290 / NCTC 10512)).